A 204-amino-acid chain; its full sequence is Large ribosomal subunit protein uL4 (204 aa).

Positions 53-73 (AFVSGGGKKPWRQKGRGGARA) are disordered.

Belongs to the universal ribosomal protein uL4 family. As to quaternary structure, part of the 50S ribosomal subunit.

Functionally, one of the primary rRNA binding proteins, this protein initially binds near the 5'-end of the 23S rRNA. It is important during the early stages of 50S assembly. It makes multiple contacts with different domains of the 23S rRNA in the assembled 50S subunit and ribosome. In terms of biological role, forms part of the polypeptide exit tunnel. The chain is Large ribosomal subunit protein uL4 from Campylobacter concisus (strain 13826).